A 477-amino-acid chain; its full sequence is Cysteine--tRNA ligase (477 aa).

Cys-29 provides a ligand contact to Zn(2+). The short motif at 31–41 (PTVYDYPHLGH) is the 'HIGH' region element. Zn(2+)-binding residues include Cys-209, His-234, and Glu-238. The 'KMSKS' region motif lies at 266-270 (KMSKS). Lys-269 lines the ATP pocket.

Belongs to the class-I aminoacyl-tRNA synthetase family. Zn(2+) serves as cofactor.

It localises to the cytoplasm. It catalyses the reaction tRNA(Cys) + L-cysteine + ATP = L-cysteinyl-tRNA(Cys) + AMP + diphosphate. In Pyrococcus abyssi (strain GE5 / Orsay), this protein is Cysteine--tRNA ligase (cysS).